Consider the following 161-residue polypeptide: Lipoprotein LpqH (161 aa).

Positions 1 to 21 (MNRQLRFAVAGPEILAAVVSG) are cleaved as a signal peptide. Residues 21–46 (GCSSGNKSAPSSSASSSSTSPSASSG) are compositionally biased toward low complexity. The disordered stretch occupies residues 21–49 (GCSSGNKSAPSSSASSSSTSPSASSGGAA). Cys22 carries N-palmitoyl cysteine lipidation. A lipid anchor (S-diacylglycerol cysteine) is attached at Cys22.

Belongs to the mycobacterial 19 kDa antigen family. In terms of processing, modified by Lgt on Cys-22 with an S-linked diacylglycerol with a mixture of C16, C18 and C19 fatty acids, signal peptide is removed by LspA, modifed by Lnt with an amide-linked mixture of C16 and C19 fatty acids.

It is found in the cell membrane. Its function is as follows. Might be involved in ligand transport. A host TLR2 agonist, modifies host gene expression in response to pathogen. This chain is Lipoprotein LpqH (lpqH), found in Mycobacterium avium.